The chain runs to 874 residues: Alanine--tRNA ligase (874 aa).

4 residues coordinate Zn(2+): His-564, His-568, Cys-665, and His-669.

The protein belongs to the class-II aminoacyl-tRNA synthetase family. Requires Zn(2+) as cofactor.

It is found in the cytoplasm. The enzyme catalyses tRNA(Ala) + L-alanine + ATP = L-alanyl-tRNA(Ala) + AMP + diphosphate. Its function is as follows. Catalyzes the attachment of alanine to tRNA(Ala) in a two-step reaction: alanine is first activated by ATP to form Ala-AMP and then transferred to the acceptor end of tRNA(Ala). Also edits incorrectly charged Ser-tRNA(Ala) and Gly-tRNA(Ala) via its editing domain. In Burkholderia mallei (strain ATCC 23344), this protein is Alanine--tRNA ligase.